A 216-amino-acid polypeptide reads, in one-letter code: Type-4 uracil-DNA glycosylase (216 aa).

2 residues coordinate [4Fe-4S] cluster: Cys14 and Cys17. Residues 41–43 (GEA), Phe55, and Asn82 contribute to the uracil site. Positions 86 and 102 each coordinate [4Fe-4S] cluster. His164 contributes to the uracil binding site.

The protein belongs to the uracil-DNA glycosylase (UDG) superfamily. Type 4 (UDGa) family. As to quaternary structure, interacts with the sliding clamp PCNA3 subunit.

The catalysed reaction is Hydrolyzes single-stranded DNA or mismatched double-stranded DNA and polynucleotides, releasing free uracil.. Removes uracil bases that are present in DNA as a result of either deamination of cytosine or misincorporation of dUMP instead of dTMP. Can remove uracil from double-stranded DNA containing either a U/G or U/A base pair as well as from single-stranded DNA. This is Type-4 uracil-DNA glycosylase from Saccharolobus solfataricus (strain ATCC 35092 / DSM 1617 / JCM 11322 / P2) (Sulfolobus solfataricus).